The sequence spans 1270 residues: MTDDNSDDKIEDELQTFFTSDKDGNTHAYNPKSPPTQNSSASSVNWNSANPDDMVVDYETDPAVVTGENISLSLQGVEVFGHEKSSSDFISKQVLDMHKDSICQCPALVGTEKPKYLQHSCHSLEAVEGQSVEPSLPFVWKPNDNLNCAGYCDALELNQTFDMTVDKVNCTFISHHAIGKSQSFHTAGSLPPTGRRSGSTSSLSYSTWTSSHSDKTHARETTYDRESFENPQVTPSEAQDMTYTAFSDVVMQSEVFVSDIGNQCACSSGKVTSEYTDGSQQRLVGEKETQALTPVSDGMEVPNDSALQEFFCLSHDESNSEPHSQSSYRHKEMGQNLRETVSYCLIDDECPLMVPAFDKSEAQVLNPEHKVTETEDTQMVSKGKDLGTQNHTSELILSSPPGQKVGSSFGLTWDANDMVISTDKTMCMSTPVLEPTKVTFSVSPIEATEKCKKVEKGNRGLKNIPDSKEAPVNLCKPSLGKSTIKTNTPIGCKVRKTEIISYPRPNFKNVKAKVMSRAVLQPKDAALSKVTPRPQQTSASSPSSVNSRQQTVLSRTPRSDLNADKKAEILINKTHKQQFNKLITSQAVHVTTHSKNASHRVPRTTSAVKSNQEDVDKASSSNSACETGSVSALFQKIKGILPVKMESAECLEMTYVPNIDRISPEKKGEKENGTSMEKQELKQEIMNETFEYGSLFLGSASKTTTTSGRNISKPDSCGLRQIAAPKAKVGPPVSCLRRNSDNRNPSADRAVSPQRIRRVSSSGKPTSLKTAQSSWVNLPRPLPKSKASLKSPALRRTGSTPSIASTHSELSTYSNNSGNAAVIKYEEKPPKPAFQNGSSGSFYLKPLVSRAHVHLMKTPPKGPSRKNLFTALNAVEKSRQKNPRSLCIQPQTAPDALPPEKTLELTQYKTKCENQSGFILQLKQLLACGNTKFEALTVVIQHLLSEREEALKQHKTLSQELVNLRGELVTASTTCEKLEKARNELQTVYEAFVQQHQAEKTERENRLKEFYTREYEKLRDTYIEEAEKYKMQLQEQFDNLNAAHETSKLEIEASHSEKLELLKKAYEASLSEIKKGHEIEKKSLEDLLSEKQESLEKQINDLKSENDALNEKLKSEEQKRRAREKANLKNPQIMYLEQELESLKAVLEIKNEKLHQQDIKLMKMEKLVDNNTALVDKLKRFQQENEELKARMDKHMAISRQLSTEQAVLQESLEKESKVNKRLSMENEELLWKLHNGDLCSPKRSPTSSAIPLQSPRNSGSFPSPSISPR.

Positions 1 to 14 are enriched in acidic residues; the sequence is MTDDNSDDKIEDEL. Disordered regions lie at residues 1 to 50 and 184 to 236; these read MTDD…NSAN and FHTA…VTPS. Low complexity predominate over residues 38 to 50; that stretch reads NSSASSVNWNSAN. A Phosphothreonine modification is found at Thr-186. Residues 197-211 are compositionally biased toward low complexity; it reads SGSTSSLSYSTWTSS. Positions 212–228 are enriched in basic and acidic residues; that stretch reads HSDKTHARETTYDRESF. A phosphoserine mark is found at Ser-381, Ser-399, and Ser-443. Disordered stretches follow at residues 524 to 560 and 592 to 622; these read DAALSKVTPRPQQTSASSPSSVNSRQQTVLSRTPRSD and THSKNASHRVPRTTSAVKSNQEDVDKASSSN. Over residues 533–556 the composition is skewed to polar residues; that stretch reads RPQQTSASSPSSVNSRQQTVLSRT. Ser-629 carries the post-translational modification Phosphoserine. 3 stretches are compositionally biased toward polar residues: residues 701-710, 759-776, and 797-815; these read SKTTTTSGRN, VSSSGKPTSLKTAQSSWV, and TGSTPSIASTHSELSTYSN. Residues 701-815 are disordered; the sequence is SKTTTTSGRN…THSELSTYSN (115 aa). A coiled-coil region spans residues 940–1231; sequence IQHLLSEREE…RLSMENEELL (292 aa). Phosphoserine is present on residues Ser-1203, Ser-1224, Ser-1245, Ser-1255, Ser-1259, Ser-1261, Ser-1264, and Ser-1268. A disordered region spans residues 1237 to 1270; it reads GDLCSPKRSPTSSAIPLQSPRNSGSFPSPSISPR. The segment covering 1244-1270 has biased composition (polar residues); the sequence is RSPTSSAIPLQSPRNSGSFPSPSISPR.

The protein belongs to the MTUS1 family. In terms of assembly, homodimer. Interacts with AGTR2. Interacts with PTPN6. Isoform 1 associates with microtubules. As to expression, ubiquitously expressed (at protein level). Highly expressed in brain. Down-regulated in ovarian carcinoma, pancreas carcinoma, colon carcinoma and head and neck squamous cell carcinoma (HNSCC). Isoform 1 is the major isoform in most peripheral tissues. Isoform 2 is abundant in most peripheral tissues. Isoform 3 is the major isoform in brain, female reproductive tissues, thyroid and heart. Within brain it is highly expressed in corpus callosum and pons. Isoform 6 is brain-specific, it is the major isoform in cerebellum and fetal brain.

Its subcellular location is the mitochondrion. The protein resides in the golgi apparatus. It is found in the cell membrane. The protein localises to the nucleus. It localises to the cytoplasm. Its subcellular location is the cytoskeleton. The protein resides in the microtubule organizing center. It is found in the centrosome. The protein localises to the spindle. Cooperates with AGTR2 to inhibit ERK2 activation and cell proliferation. May be required for AGTR2 cell surface expression. Together with PTPN6, induces UBE2V2 expression upon angiotensin-II stimulation. Isoform 1 inhibits breast cancer cell proliferation, delays the progression of mitosis by prolonging metaphase and reduces tumor growth. The chain is Microtubule-associated tumor suppressor 1 (MTUS1) from Homo sapiens (Human).